Reading from the N-terminus, the 152-residue chain is SsrA-binding protein (152 aa).

This sequence belongs to the SmpB family.

It is found in the cytoplasm. Functionally, required for rescue of stalled ribosomes mediated by trans-translation. Binds to transfer-messenger RNA (tmRNA), required for stable association of tmRNA with ribosomes. tmRNA and SmpB together mimic tRNA shape, replacing the anticodon stem-loop with SmpB. tmRNA is encoded by the ssrA gene; the 2 termini fold to resemble tRNA(Ala) and it encodes a 'tag peptide', a short internal open reading frame. During trans-translation Ala-aminoacylated tmRNA acts like a tRNA, entering the A-site of stalled ribosomes, displacing the stalled mRNA. The ribosome then switches to translate the ORF on the tmRNA; the nascent peptide is terminated with the 'tag peptide' encoded by the tmRNA and targeted for degradation. The ribosome is freed to recommence translation, which seems to be the essential function of trans-translation. This Lactobacillus helveticus (strain DPC 4571) protein is SsrA-binding protein.